The following is a 435-amino-acid chain: Adenylosuccinate synthetase (435 aa).

Residues 13–19 (GDEGKGK) and 41–43 (GHT) each bind GTP. The active-site Proton acceptor is the aspartate 14. Mg(2+) is bound by residues aspartate 14 and glycine 41. Residues 14-17 (DEGK), 39-42 (NAGH), threonine 131, arginine 145, glutamine 226, threonine 241, and arginine 309 each bind IMP. The Proton donor role is filled by histidine 42. 305 to 311 (TVTGRKR) lines the substrate pocket. Residues arginine 311, 337-339 (KLD), and 419-421 (STG) each bind GTP.

Belongs to the adenylosuccinate synthetase family. Homodimer. Mg(2+) is required as a cofactor.

The protein resides in the cytoplasm. It catalyses the reaction IMP + L-aspartate + GTP = N(6)-(1,2-dicarboxyethyl)-AMP + GDP + phosphate + 2 H(+). The protein operates within purine metabolism; AMP biosynthesis via de novo pathway; AMP from IMP: step 1/2. Its function is as follows. Plays an important role in the de novo pathway of purine nucleotide biosynthesis. Catalyzes the first committed step in the biosynthesis of AMP from IMP. This is Adenylosuccinate synthetase from Dechloromonas aromatica (strain RCB).